Reading from the N-terminus, the 87-residue chain is Large ribosomal subunit protein bL31B (87 aa).

Belongs to the bacterial ribosomal protein bL31 family. Type B subfamily. As to quaternary structure, part of the 50S ribosomal subunit.

The protein is Large ribosomal subunit protein bL31B of Pseudomonas paraeruginosa (strain DSM 24068 / PA7) (Pseudomonas aeruginosa (strain PA7)).